Here is a 459-residue protein sequence, read N- to C-terminus: 4,4'-diaponeurosporen-aldehyde dehydrogenase (459 aa).

NAD(+) is bound by residues Phe-114–Asn-115 and Gly-188–Ser-189. The active-site Proton acceptor is Glu-210. Met-211 serves as a coordination point for NAD(+). Residue Cys-244 is the Nucleophile of the active site. Glu-336 provides a ligand contact to NAD(+).

This sequence belongs to the aldehyde dehydrogenase family.

The catalysed reaction is 4,4'-diaponeurosporenal + NAD(+) + H2O = 4,4'-diaponeurosporenoate + NADH + 2 H(+). It participates in carotenoid biosynthesis; staphyloxanthin biosynthesis; staphyloxanthin from farnesyl diphosphate. Involved in the biosynthesis of the yellow-orange carotenoid staphyloxanthin, which plays a role in the virulence via its protective function against oxidative stress. Catalyzes the oxidation of 4,4'-diaponeurosporen-4-al to yield 4,4'-diaponeurosporenoic acid. The protein is 4,4'-diaponeurosporen-aldehyde dehydrogenase of Staphylococcus aureus (strain NCTC 8325 / PS 47).